Here is a 487-residue protein sequence, read N- to C-terminus: Cobyric acid synthase (487 aa).

The 188-residue stretch at 248-435 folds into the GATase cobBQ-type domain; that stretch reads VLKVIVPVLP…LHGLFEGSQS (188 aa). The Nucleophile role is filled by Cys329. His427 is an active-site residue.

It belongs to the CobB/CobQ family. CobQ subfamily.

Its pathway is cofactor biosynthesis; adenosylcobalamin biosynthesis. In terms of biological role, catalyzes amidations at positions B, D, E, and G on adenosylcobyrinic A,C-diamide. NH(2) groups are provided by glutamine, and one molecule of ATP is hydrogenolyzed for each amidation. The protein is Cobyric acid synthase of Pseudomonas entomophila (strain L48).